The chain runs to 253 residues: uncharacterized protein (253 aa).

Ile17, Ser36, Asp62, Asn89, Lys123, Tyr158, Lys162, Val191, and Thr193 together coordinate NADP(+). Catalysis depends on Tyr158, which acts as the Proton acceptor. Lys162 serves as the catalytic Lowers pKa of active site Tyr.

Belongs to the short-chain dehydrogenases/reductases (SDR) family.

The protein localises to the cytoplasm. It localises to the nucleus. This is an uncharacterized protein from Schizosaccharomyces pombe (strain 972 / ATCC 24843) (Fission yeast).